A 447-amino-acid chain; its full sequence is Tubulin alpha chain (447 aa).

7 residues coordinate GTP: Gln11, Glu71, Gly144, Thr145, Thr179, Asn206, and Asn228. Glu71 is a Mg(2+) binding site. The active site involves Glu254.

Belongs to the tubulin family. In terms of assembly, dimer of alpha and beta chains. A typical microtubule is a hollow water-filled tube with an outer diameter of 25 nm and an inner diameter of 15 nM. Alpha-beta heterodimers associate head-to-tail to form protofilaments running lengthwise along the microtubule wall with the beta-tubulin subunit facing the microtubule plus end conferring a structural polarity. Microtubules usually have 13 protofilaments but different protofilament numbers can be found in some organisms and specialized cells. Requires Mg(2+) as cofactor.

The protein localises to the cytoplasm. The protein resides in the cytoskeleton. The catalysed reaction is GTP + H2O = GDP + phosphate + H(+). Functionally, tubulin is the major constituent of microtubules, a cylinder consisting of laterally associated linear protofilaments composed of alpha- and beta-tubulin heterodimers. Microtubules grow by the addition of GTP-tubulin dimers to the microtubule end, where a stabilizing cap forms. Below the cap, tubulin dimers are in GDP-bound state, owing to GTPase activity of alpha-tubulin. The sequence is that of Tubulin alpha chain (TUBA) from Avena sativa (Oat).